A 342-amino-acid polypeptide reads, in one-letter code: Phosphate acyltransferase (342 aa).

This sequence belongs to the PlsX family. Homodimer. Probably interacts with PlsY.

It is found in the cytoplasm. It carries out the reaction a fatty acyl-[ACP] + phosphate = an acyl phosphate + holo-[ACP]. The protein operates within lipid metabolism; phospholipid metabolism. Its function is as follows. Catalyzes the reversible formation of acyl-phosphate (acyl-PO(4)) from acyl-[acyl-carrier-protein] (acyl-ACP). This enzyme utilizes acyl-ACP as fatty acyl donor, but not acyl-CoA. This Leuconostoc mesenteroides subsp. mesenteroides (strain ATCC 8293 / DSM 20343 / BCRC 11652 / CCM 1803 / JCM 6124 / NCDO 523 / NBRC 100496 / NCIMB 8023 / NCTC 12954 / NRRL B-1118 / 37Y) protein is Phosphate acyltransferase.